The following is a 141-amino-acid chain: Hemoglobin subunit alpha (141 aa).

The 141-residue stretch at 1 to 141 (VLSAADKGNV…VSTVLTSKYR (141 aa)) folds into the Globin domain. Ser3 carries the phosphoserine modification. Residues Lys7 and Lys11 each carry the N6-succinyllysine modification. An N6-acetyllysine; alternate modification is found at Lys16. The residue at position 16 (Lys16) is an N6-succinyllysine; alternate. Phosphotyrosine is present on Tyr24. Ser35 bears the Phosphoserine mark. Lys40 is subject to N6-succinyllysine. An O2-binding site is contributed by His58. Position 87 (His87) interacts with heme b. A Phosphoserine modification is found at Ser102. Position 108 is a phosphothreonine (Thr108). Phosphoserine is present on residues Ser124 and Ser131. Phosphothreonine is present on residues Thr134 and Thr137. Position 138 is a phosphoserine (Ser138).

This sequence belongs to the globin family. Heterotetramer of two alpha chains and two beta chains. In terms of tissue distribution, red blood cells.

Its function is as follows. Involved in oxygen transport from the lung to the various peripheral tissues. In terms of biological role, hemopressin acts as an antagonist peptide of the cannabinoid receptor CNR1. Hemopressin-binding efficiently blocks cannabinoid receptor CNR1 and subsequent signaling. The protein is Hemoglobin subunit alpha (HBA) of Macrotus californicus (Californian leaf-nosed bat).